Here is a 111-residue protein sequence, read N- to C-terminus: Cytochrome c (111 aa).

Alanine 1 bears the N-acetylalanine mark. 3 residues coordinate heme c: cysteine 22, cysteine 25, and histidine 26. Lysine 80 carries the N6,N6,N6-trimethyllysine modification. Methionine 88 provides a ligand contact to heme c. N6,N6,N6-trimethyllysine is present on lysine 94.

The protein belongs to the cytochrome c family. In terms of processing, binds 1 heme c group covalently per subunit.

The protein localises to the mitochondrion intermembrane space. In terms of biological role, electron carrier protein. The oxidized form of the cytochrome c heme group can accept an electron from the heme group of the cytochrome c1 subunit of cytochrome reductase. Cytochrome c then transfers this electron to the cytochrome oxidase complex, the final protein carrier in the mitochondrial electron-transport chain. The sequence is that of Cytochrome c from Cucurbita maxima (Pumpkin).